Reading from the N-terminus, the 61-residue chain is Small ribosomal subunit protein uS14 (61 aa).

Residues Cys24, Cys27, Cys40, and Cys43 each contribute to the Zn(2+) site.

This sequence belongs to the universal ribosomal protein uS14 family. Zinc-binding uS14 subfamily. Part of the 30S ribosomal subunit. Contacts proteins S3 and S10. Zn(2+) serves as cofactor.

Its function is as follows. Binds 16S rRNA, required for the assembly of 30S particles and may also be responsible for determining the conformation of the 16S rRNA at the A site. This chain is Small ribosomal subunit protein uS14, found in Mesomycoplasma hyopneumoniae (strain 232) (Mycoplasma hyopneumoniae).